A 551-amino-acid chain; its full sequence is Glucans biosynthesis protein D (551 aa).

A signal peptide (tat-type signal) is located at residues 1–32; the sequence is MDRRRFIKGSMAMAAVCGTSGIASLFSQAAFA.

The protein belongs to the OpgD/OpgG family. Post-translationally, predicted to be exported by the Tat system. The position of the signal peptide cleavage has not been experimentally proven.

The protein localises to the periplasm. Its pathway is glycan metabolism; osmoregulated periplasmic glucan (OPG) biosynthesis. Probably involved in the control of the structural glucose backbone of osmoregulated periplasmic glucans (OPGs). In Escherichia coli O127:H6 (strain E2348/69 / EPEC), this protein is Glucans biosynthesis protein D.